The primary structure comprises 291 residues: Protease HtpX (291 aa).

2 helical membrane-spanning segments follow: residues 4–24 and 37–57; these read VLLF…VLSV and GGLL…SLLM. His-143 is a Zn(2+) binding site. Glu-144 is an active-site residue. His-147 lines the Zn(2+) pocket. 2 helical membrane passes run 158-178 and 198-218; these read LIQG…AGIV and FAIS…IVMW. Glu-224 serves as a coordination point for Zn(2+).

Belongs to the peptidase M48B family. Requires Zn(2+) as cofactor.

Its subcellular location is the cell inner membrane. The polypeptide is Protease HtpX (Tolumonas auensis (strain DSM 9187 / NBRC 110442 / TA 4)).